The following is a 123-amino-acid chain: Small ribosomal subunit protein uS12 (123 aa).

Asp89 is modified (3-methylthioaspartic acid).

It belongs to the universal ribosomal protein uS12 family. As to quaternary structure, part of the 30S ribosomal subunit. Contacts proteins S8 and S17. May interact with IF1 in the 30S initiation complex.

Functionally, with S4 and S5 plays an important role in translational accuracy. Its function is as follows. Interacts with and stabilizes bases of the 16S rRNA that are involved in tRNA selection in the A site and with the mRNA backbone. Located at the interface of the 30S and 50S subunits, it traverses the body of the 30S subunit contacting proteins on the other side and probably holding the rRNA structure together. The combined cluster of proteins S8, S12 and S17 appears to hold together the shoulder and platform of the 30S subunit. In Geobacter metallireducens (strain ATCC 53774 / DSM 7210 / GS-15), this protein is Small ribosomal subunit protein uS12.